The following is a 112-amino-acid chain: UPF0342 protein SSU05_1260 (112 aa).

The protein belongs to the UPF0342 family.

The polypeptide is UPF0342 protein SSU05_1260 (Streptococcus suis (strain 05ZYH33)).